A 196-amino-acid polypeptide reads, in one-letter code: dITP/XTP pyrophosphatase (196 aa).

A substrate-binding site is contributed by 9–14; it reads TSNAGK. Residues Glu-39 and Asp-68 each contribute to the Mg(2+) site. Asp-68 functions as the Proton acceptor in the catalytic mechanism. Substrate is bound by residues Ser-69, 147–150, Lys-170, and 175–176; these read FGYD and HR.

This sequence belongs to the HAM1 NTPase family. In terms of assembly, homodimer. Mg(2+) is required as a cofactor.

The enzyme catalyses XTP + H2O = XMP + diphosphate + H(+). The catalysed reaction is dITP + H2O = dIMP + diphosphate + H(+). It carries out the reaction ITP + H2O = IMP + diphosphate + H(+). Functionally, pyrophosphatase that catalyzes the hydrolysis of nucleoside triphosphates to their monophosphate derivatives, with a high preference for the non-canonical purine nucleotides XTP (xanthosine triphosphate), dITP (deoxyinosine triphosphate) and ITP. Seems to function as a house-cleaning enzyme that removes non-canonical purine nucleotides from the nucleotide pool, thus preventing their incorporation into DNA/RNA and avoiding chromosomal lesions. The chain is dITP/XTP pyrophosphatase from Nostoc sp. (strain PCC 7120 / SAG 25.82 / UTEX 2576).